Consider the following 556-residue polypeptide: Urocanate hydratase (556 aa).

Residues 52–53, Gln-130, 176–178, Glu-196, Arg-201, 242–243, 263–267, 273–274, and Tyr-322 contribute to the NAD(+) site; these read GG, GMG, NA, QTSAH, and YL. Cys-410 is an active-site residue. NAD(+) is bound at residue Gly-492.

Belongs to the urocanase family. Requires NAD(+) as cofactor.

The protein localises to the cytoplasm. The enzyme catalyses 4-imidazolone-5-propanoate = trans-urocanate + H2O. It participates in amino-acid degradation; L-histidine degradation into L-glutamate; N-formimidoyl-L-glutamate from L-histidine: step 2/3. Its function is as follows. Catalyzes the conversion of urocanate to 4-imidazolone-5-propionate. In Shewanella frigidimarina (strain NCIMB 400), this protein is Urocanate hydratase.